Consider the following 139-residue polypeptide: Crossover junction endodeoxyribonuclease Hje (139 aa).

Mg(2+) is bound by residues glutamate 10, aspartate 39, and glutamate 52.

It belongs to the Holliday junction resolvase Hjc family. Hje subfamily. As to quaternary structure, homodimer. Mg(2+) is required as a cofactor.

The catalysed reaction is Endonucleolytic cleavage at a junction such as a reciprocal single-stranded crossover between two homologous DNA duplexes (Holliday junction).. In terms of biological role, a structure-specific endonuclease that resolves Holliday junction (HJ) intermediates during genetic recombination. Acts only on 4-way DNA junctions in a sequence non-specific manner; introduces paired nicks in opposing strands 2 bases 3' of the point of strand exchange only on continuous strands of 4-way junction DNA. Cleaves both mobile and immobile junctions. Redundant function with Holliday junction resolvase Hjc. In Sulfolobus acidocaldarius (strain ATCC 33909 / DSM 639 / JCM 8929 / NBRC 15157 / NCIMB 11770), this protein is Crossover junction endodeoxyribonuclease Hje.